Reading from the N-terminus, the 680-residue chain is Epithelial splicing regulatory protein 1 (680 aa).

3 consecutive RRM domains span residues 224-301, 325-405, and 444-524; these read TVVR…KATG, VIVR…RSTA, and DCIR…QCSA. Ser542 carries the phosphoserine modification. Arg581 carries the omega-N-methylarginine modification.

Belongs to the ESRP family. Epithelial cell-specific. Epithelial-specific expression in diverse tissues and organs with particularly notable levels of expression in skin and gastrointestinal epithelia.

The protein resides in the nucleus. Functionally, mRNA splicing factor that regulates the formation of epithelial cell-specific isoforms. Specifically regulates the expression of FGFR2-IIIb, an epithelial cell-specific isoform of FGFR2. Also regulates the splicing of CD44, CTNND1, ENAH, 3 transcripts that undergo changes in splicing during the epithelial-to-mesenchymal transition (EMT). Acts by directly binding specific sequences in mRNAs. Binds the GU-rich sequence motifs in the ISE/ISS-3, a cis-element regulatory region present in the mRNA of FGFR2. Regulates splicing and expression of genes involved in inner ear development, auditory hair cell differentiation, and cell fate specification in the cochlear epithelium. This Mus musculus (Mouse) protein is Epithelial splicing regulatory protein 1 (Esrp1).